The sequence spans 194 residues: Probable transcription factor At4g00130 (194 aa).

This sequence belongs to the GeBP family.

This is Probable transcription factor At4g00130 from Arabidopsis thaliana (Mouse-ear cress).